Reading from the N-terminus, the 73-residue chain is Putative antimicrobial peptide clone 5 (73 aa).

An N-terminal signal peptide occupies residues 1–22 (MQIKHLITLFFLVLIGADQCSA). A propeptide spanning residues 45–73 (EVSPQIDQYRNFQKREAELEELLDRLPMY) is cleaved from the precursor.

It belongs to the non-disulfide-bridged peptide (NDBP) superfamily. Short antimicrobial peptide (group 4) family. In terms of tissue distribution, expressed by the venom gland.

It localises to the secreted. Functionally, antibacterial peptide. The chain is Putative antimicrobial peptide clone 5 from Tityus costatus (Brazilian scorpion).